The sequence spans 343 residues: Methionine import ATP-binding protein MetN 2 (343 aa).

One can recognise an ABC transporter domain in the interval 2 to 241 (IEFKDVTKTF…PQQAVTKRFV (240 aa)). 38 to 45 (GYSGAGKS) provides a ligand contact to ATP.

Belongs to the ABC transporter superfamily. Methionine importer (TC 3.A.1.24) family. In terms of assembly, the complex is composed of two ATP-binding proteins (MetN), two transmembrane proteins (MetI) and a solute-binding protein (MetQ).

Its subcellular location is the cell membrane. It carries out the reaction L-methionine(out) + ATP + H2O = L-methionine(in) + ADP + phosphate + H(+). The enzyme catalyses D-methionine(out) + ATP + H2O = D-methionine(in) + ADP + phosphate + H(+). In terms of biological role, part of the ABC transporter complex MetNIQ involved in methionine import. Responsible for energy coupling to the transport system. The polypeptide is Methionine import ATP-binding protein MetN 2 (Lactiplantibacillus plantarum (strain ATCC BAA-793 / NCIMB 8826 / WCFS1) (Lactobacillus plantarum)).